The primary structure comprises 365 residues: Holliday junction branch migration complex subunit RuvB (365 aa).

Residues 1 to 191 (MNFDPIDDFD…FGFTAHMDFY (191 aa)) form a large ATPase domain (RuvB-L) region. ATP is bound by residues Leu-30, Arg-31, Gly-72, Lys-75, Thr-76, Ser-77, 138 to 140 (EDF), Arg-181, Tyr-191, and Arg-228. Residue Thr-76 coordinates Mg(2+). Residues 192–262 (EPEELQQILM…VAQAALAVYD (71 aa)) are small ATPAse domain (RuvB-S). A head domain (RuvB-H) region spans residues 265–365 (QLGLDRLDRS…QATLFDPNGE (101 aa)). DNA is bound by residues Arg-320 and Arg-325.

This sequence belongs to the RuvB family. As to quaternary structure, homohexamer. Forms an RuvA(8)-RuvB(12)-Holliday junction (HJ) complex. HJ DNA is sandwiched between 2 RuvA tetramers; dsDNA enters through RuvA and exits via RuvB. An RuvB hexamer assembles on each DNA strand where it exits the tetramer. Each RuvB hexamer is contacted by two RuvA subunits (via domain III) on 2 adjacent RuvB subunits; this complex drives branch migration. In the full resolvosome a probable DNA-RuvA(4)-RuvB(12)-RuvC(2) complex forms which resolves the HJ.

The protein localises to the cytoplasm. The enzyme catalyses ATP + H2O = ADP + phosphate + H(+). The RuvA-RuvB-RuvC complex processes Holliday junction (HJ) DNA during genetic recombination and DNA repair, while the RuvA-RuvB complex plays an important role in the rescue of blocked DNA replication forks via replication fork reversal (RFR). RuvA specifically binds to HJ cruciform DNA, conferring on it an open structure. The RuvB hexamer acts as an ATP-dependent pump, pulling dsDNA into and through the RuvAB complex. RuvB forms 2 homohexamers on either side of HJ DNA bound by 1 or 2 RuvA tetramers; 4 subunits per hexamer contact DNA at a time. Coordinated motions by a converter formed by DNA-disengaged RuvB subunits stimulates ATP hydrolysis and nucleotide exchange. Immobilization of the converter enables RuvB to convert the ATP-contained energy into a lever motion, pulling 2 nucleotides of DNA out of the RuvA tetramer per ATP hydrolyzed, thus driving DNA branch migration. The RuvB motors rotate together with the DNA substrate, which together with the progressing nucleotide cycle form the mechanistic basis for DNA recombination by continuous HJ branch migration. Branch migration allows RuvC to scan DNA until it finds its consensus sequence, where it cleaves and resolves cruciform DNA. The protein is Holliday junction branch migration complex subunit RuvB of Rhodococcus erythropolis (strain PR4 / NBRC 100887).